A 318-amino-acid polypeptide reads, in one-letter code: Ribonuclease Z (318 aa).

Residues H62, H64, D66, H67, H144, D215, and H273 each contribute to the Zn(2+) site. Residue D66 is the Proton acceptor of the active site.

The protein belongs to the RNase Z family. Homodimer. Requires Zn(2+) as cofactor.

It carries out the reaction Endonucleolytic cleavage of RNA, removing extra 3' nucleotides from tRNA precursor, generating 3' termini of tRNAs. A 3'-hydroxy group is left at the tRNA terminus and a 5'-phosphoryl group is left at the trailer molecule.. In terms of biological role, zinc phosphodiesterase, which displays some tRNA 3'-processing endonuclease activity. Probably involved in tRNA maturation, by removing a 3'-trailer from precursor tRNA. This chain is Ribonuclease Z, found in Prochlorococcus marinus (strain MIT 9303).